The primary structure comprises 392 residues: Acetyl-CoA acetyltransferase (392 aa).

Catalysis depends on cysteine 89, which acts as the Acyl-thioester intermediate. Residues histidine 348 and cysteine 378 each act as proton acceptor in the active site.

It belongs to the thiolase-like superfamily. Thiolase family. As to quaternary structure, homotetramer.

It is found in the cytoplasm. The enzyme catalyses 2 acetyl-CoA = acetoacetyl-CoA + CoA. It participates in biopolymer metabolism; poly-(R)-3-hydroxybutanoate biosynthesis. Its pathway is metabolic intermediate biosynthesis; (R)-mevalonate biosynthesis; (R)-mevalonate from acetyl-CoA: step 1/3. This Shinella zoogloeoides (Crabtreella saccharophila) protein is Acetyl-CoA acetyltransferase.